The following is a 199-amino-acid chain: MEKKTGTTTVGIRTKEGVVLAADTQASLDHMVETLNIRKILPITDRIAITTAGSVGDVQALARMLEAEARYYQFTWGRPMTAKAMAHLLSNILNENKWFPYMVQIIIGGYVEEPTLANLDPLGGLIFDDYTATGSGSPFAIAVLEDGFRKDMSLEEAKELAVRAVRTAGKRDVYTGDRKVQVVVISKDGMKEEFVEFKE.

The propeptide at 1–6 is removed in mature form; by autocatalysis; sequence MEKKTG. Thr7 functions as the Nucleophile in the catalytic mechanism.

The protein belongs to the peptidase T1B family. In terms of assembly, the 20S proteasome core is composed of 14 alpha and 14 beta subunits that assemble into four stacked heptameric rings, resulting in a barrel-shaped structure. The two inner rings, each composed of seven catalytic beta subunits, are sandwiched by two outer rings, each composed of seven alpha subunits. The catalytic chamber with the active sites is on the inside of the barrel. Has a gated structure, the ends of the cylinder being occluded by the N-termini of the alpha-subunits. Is capped at one or both ends by the proteasome regulatory ATPase, PAN.

The protein localises to the cytoplasm. It carries out the reaction Cleavage of peptide bonds with very broad specificity.. The formation of the proteasomal ATPase PAN-20S proteasome complex, via the docking of the C-termini of PAN into the intersubunit pockets in the alpha-rings, triggers opening of the gate for substrate entry. Interconversion between the open-gate and close-gate conformations leads to a dynamic regulation of the 20S proteasome proteolysis activity. In terms of biological role, component of the proteasome core, a large protease complex with broad specificity involved in protein degradation. This Thermococcus kodakarensis (strain ATCC BAA-918 / JCM 12380 / KOD1) (Pyrococcus kodakaraensis (strain KOD1)) protein is Proteasome subunit beta 2.